Here is a 221-residue protein sequence, read N- to C-terminus: Intraflagellar transport-associated protein (221 aa).

A Phosphoserine modification is found at Ser-59.

Interacts with IFT122; the interaction associates IFTAP with IFT-A complex.

Its function is as follows. Seems to play a role in ciliary BBSome localization, maybe through interaction with IFT-A complex. This chain is Intraflagellar transport-associated protein, found in Homo sapiens (Human).